Consider the following 933-residue polypeptide: Potassium voltage-gated channel subfamily KQT member 5 (933 aa).

Topologically, residues 1–126 are cytoplasmic; the sequence is MPRHHAGGEE…YNVLERPRGW (126 aa). Residue serine 89 is modified to Phosphoserine. The helical transmembrane segment at 127-147 threads the bilayer; sequence AFVYHAFVFLLVFGCLILSVF. The Extracellular portion of the chain corresponds to 148 to 157; the sequence is STIPEHTKLA. A helical membrane pass occupies residues 158–178; the sequence is SSCLLILEFVMIVVFGLEFII. The Cytoplasmic portion of the chain corresponds to 179-201; the sequence is RIWSAGCCCRYRGWQGRLRFARK. Residues 202–222 form a helical membrane-spanning segment; the sequence is PFCVIDTIVLIASIAVVSAKT. Over 223–230 the chain is Extracellular; the sequence is QGNIFATS. A helical; Voltage-sensor membrane pass occupies residues 231 to 253; sequence ALRSLRFLQILRMVRMDRRGGTW. A 1,2-diacyl-sn-glycero-3-phospho-(1D-myo-inositol-4,5-bisphosphate) is bound by residues arginine 249 and lysine 265. The Cytoplasmic segment spans residues 254–267; the sequence is KLLGSVVYAHSKEL. A helical transmembrane segment spans residues 268 to 288; sequence ITAWYIGFLVLIFSSFLVYLV. The Extracellular segment spans residues 289-299; sequence EKDANKEFSTY. Residues 300–320 constitute an intramembrane region (pore-forming); it reads ADALWWGTITLTTIGYGDKTP. Over 321 to 326 the chain is Extracellular; the sequence is LTWLGR. The chain crosses the membrane as a helical span at residues 327 to 347; the sequence is LLSAGFALLGISFFALPAGIL. The Cytoplasmic portion of the chain corresponds to 348–933; the sequence is GSGFALKVQE…ALSLPHVKLN (586 aa). Lysine 362 serves as a coordination point for a 1,2-diacyl-sn-glycero-3-phospho-(1D-myo-inositol-4,5-bisphosphate). The interaction with CALM stretch occupies residues 371–379; sequence AANLIQCVW. The disordered stretch occupies residues 405-465; sequence SPTKKEQGEA…EGSPTKVQKS (61 aa). A compositionally biased stretch (polar residues) spans 432–441; it reads RGQSIKSRQA. Serine 448 carries the post-translational modification Phosphoserine. The tract at residues 522–529 is interaction with CALM; sequence VIRAIRIM. Residues 578–598 are disordered; the sequence is KGQMTSDKKSREKITAEHETT. Residues 583–598 are compositionally biased toward basic and acidic residues; sequence SDKKSREKITAEHETT. Residue serine 832 is modified to Phosphoserine. The segment at 878 to 933 is disordered; the sequence is GAEETETDTFDGTPPPAGEAAFSSDSLRTGRSRSSQNICKTGDSTDALSLPHVKLN. Residues 900 to 924 show a composition bias toward polar residues; the sequence is SSDSLRTGRSRSSQNICKTGDSTDA.

The protein belongs to the potassium channel family. KQT (TC 1.A.1.15) subfamily. Kv7.5/KCNQ5 sub-subfamily. In terms of assembly, homotetramer; forms a functional homotetrameric channel resulting in the expression of a small M-current. Heterotetramer with KCNQ3; forms heterotetrameric M-channel responsible for the native M-current. Heterotetramer with KCNQ1; forms a functional voltage-gated potassium channel. Interacts (via C-terminus) with calmodulin/CALM; forms a heterooctameric structure (with 4:4 KCNQ1:CALM stoichiometry); the interaction is calcium-independent, constitutive and participates in the channel function. As to expression, strongly expressed in brain. Also expressed in colon, lung and uterus.

It localises to the cell membrane. It catalyses the reaction K(+)(in) = K(+)(out). With respect to regulation, phosphatidylinositol-4,5-bisphosphate (PIP2) is essential to activate KCNQ5 channel by inducing the coupling of the voltage-sensing domain (VSD) and the pore-forming domain (PD). Calcium suppresses KCNQ5 channel current through calcium-bound CALM C-terminus. Therefore CALM acts as calcium sensor that controls channel activity. Zinc potentiates channel activity in a pH-dependent manner. The activity is modulated by small changes in cell volume. Activated by the anticonvulsant retigabine. Inhibited by linopirdine and XE991. Functionally, pore-forming subunit of the voltage-gated potassium (Kv) channel broadly expressed in brain and skeletal muscle and involved in the regulation of neuronal excitability. Associates with KCNQ3/Kv7.3 pore-forming subunit to form a potassium channel which contributes to M-type current, a slowly activating and deactivating potassium conductance which plays a critical role in determining the subthreshold electrical excitability of neurons. Contributes, with other potassium channels, to the molecular diversity of a heterogeneous population of M-channels, varying in kinetic and pharmacological properties, which underlie this physiologically important current. Also forms a functional channel with KCNQ1/Kv7.1 subunit that may contribute to vasoconstriction and hypertension. Channel may be selectively permeable in vitro to other cations besides potassium, in decreasing order of affinity K(+) = Rb(+) &gt; Cs(+) &gt; Na(+). In Mus musculus (Mouse), this protein is Potassium voltage-gated channel subfamily KQT member 5.